The chain runs to 414 residues: Protein DNA-DAMAGE INDUCIBLE 1 (414 aa).

In terms of domain architecture, Ubiquitin-like spans 1–76; that stretch reads MRITVMTAGE…LMMMVSNASS (76 aa). A Peptidase A2 domain is found at 213-292; sequence LKAFVDSGAQ…NMEFLFGLDM (80 aa). Aspartate 218 is an active-site residue. The disordered stretch occupies residues 332–374; sequence ERVPNDASSSGATVPSGFTEKKNNTVANPTSQQPKRQNTSEGP. Polar residues predominate over residues 355 to 372; that stretch reads NTVANPTSQQPKRQNTSE. The UBA domain maps to 374 to 414; the sequence is PEFEAKIAKLVELGFSRDSVIQALKLFEGNEEQAAGFLFGG.

It belongs to the DDI1 family. As to quaternary structure, homodimer.

Its subcellular location is the cytoplasm. It is found in the cytosol. Receptor of ubiquitinated protein targeted to ubiquitin/proteasome-mediated proteolysis (UPP). Relatively weak affinity for both 'Lys-48'- and 'Lys-63'-linked ubiquitin chains with a slight preference for 'Lys-48-'linked chains of three or more ubiquitin units. This chain is Protein DNA-DAMAGE INDUCIBLE 1, found in Arabidopsis thaliana (Mouse-ear cress).